We begin with the raw amino-acid sequence, 463 residues long: A-type ATP synthase subunit B (463 aa).

This sequence belongs to the ATPase alpha/beta chains family. As to quaternary structure, has multiple subunits with at least A(3), B(3), C, D, E, F, H, I and proteolipid K(x).

It is found in the cell membrane. Component of the A-type ATP synthase that produces ATP from ADP in the presence of a proton gradient across the membrane. The B chain is a regulatory subunit. The protein is A-type ATP synthase subunit B of Thermococcus gammatolerans (strain DSM 15229 / JCM 11827 / EJ3).